The sequence spans 107 residues: Glutaredoxin-1 (107 aa).

A2 is subject to N-acetylalanine. A Glutaredoxin domain is found at 3–106 (QEFVNCKIQS…TRLKQIGALQ (104 aa)). N6-succinyllysine is present on K9. 2 disulfides stabilise this stretch: C23–C26 and C79–C83.

Belongs to the glutaredoxin family.

The protein resides in the cytoplasm. Functionally, has a glutathione-disulfide oxidoreductase activity in the presence of NADPH and glutathione reductase. Reduces low molecular weight disulfides and proteins. This is Glutaredoxin-1 (Glrx) from Mus musculus (Mouse).